Here is a 400-residue protein sequence, read N- to C-terminus: Multidrug resistance protein MdtH (400 aa).

The Cytoplasmic portion of the chain corresponds to 1 to 12; the sequence is MSRVSQARNLGK. Residues 13 to 33 traverse the membrane as a helical segment; it reads YFLLIDNMLVVLGFFVVFPLI. Residues 34–98 lie on the Periplasmic side of the membrane; that stretch reads SIRFVDQMGW…GFATMGIAHE (65 aa). Residues 99–116 traverse the membrane as a helical segment; it reads PWLLWFSCLLSGLGGTLF. The Cytoplasmic segment spans residues 117-138; sequence DPPRSALVVKLIRPQQRGRFFS. Residues 139–159 traverse the membrane as a helical segment; that stretch reads LLMMQDSAGAVIGALLGSWLL. Over 160–164 the chain is Periplasmic; that stretch reads QYDFR. Residues 165–185 traverse the membrane as a helical segment; it reads LVCATGAVLFVLCAAFNAWLL. Topologically, residues 186–213 are cytoplasmic; the sequence is PAWKLSTVRTPVREGMTRVMRDKRFVTY. A helical membrane pass occupies residues 214–232; the sequence is VLTLAGYYMLAVQVMLPIM. At 233 to 241 the chain is on the periplasmic side; that stretch reads VNDVAGAPS. A helical membrane pass occupies residues 242-262; it reads AVKWMYAIEACLSLTLLYPIA. At 263–274 the chain is on the cytoplasmic side; that stretch reads RWSEKHFRLEHR. A helical transmembrane segment spans residues 275 to 295; sequence LMAGLLIMSLSMMPVGMVSGL. Over 296–297 the chain is Periplasmic; that stretch reads QQ. Residues 298–318 form a helical membrane-spanning segment; sequence LFTLICLFYIGSIIAEPARET. Residues 319–337 lie on the Cytoplasmic side of the membrane; that stretch reads LSASLADARARGSYMGFSR. A helical membrane pass occupies residues 338–358; it reads LGLAIGGAIGYIGGGWLFDLG. At 359–365 the chain is on the periplasmic side; that stretch reads KSAHQPE. The chain crosses the membrane as a helical span at residues 366 to 386; that stretch reads LPWMMLGIIGIFTFLALGWQF. Residues 387–400 are Cytoplasmic-facing; the sequence is SQKRAARRLLERDA.

Belongs to the major facilitator superfamily. DHA1 family. MdtH (TC 2.A.1.2.21) subfamily.

It is found in the cell inner membrane. This Shigella boydii serotype 4 (strain Sb227) protein is Multidrug resistance protein MdtH.